The sequence spans 462 residues: L-seryl-tRNA(Sec) selenium transferase (462 aa).

Lys293 is modified (N6-(pyridoxal phosphate)lysine).

This sequence belongs to the SelA family. The cofactor is pyridoxal 5'-phosphate.

It is found in the cytoplasm. It catalyses the reaction L-seryl-tRNA(Sec) + selenophosphate + H(+) = L-selenocysteinyl-tRNA(Sec) + phosphate. Its pathway is aminoacyl-tRNA biosynthesis; selenocysteinyl-tRNA(Sec) biosynthesis; selenocysteinyl-tRNA(Sec) from L-seryl-tRNA(Sec) (bacterial route): step 1/1. Converts seryl-tRNA(Sec) to selenocysteinyl-tRNA(Sec) required for selenoprotein biosynthesis. The protein is L-seryl-tRNA(Sec) selenium transferase of Clostridium botulinum (strain 657 / Type Ba4).